The sequence spans 111 residues: Putative splicing factor C222.18 (111 aa).

Residues 18-95 enclose the RRM domain; it reads HTLYIRNFGT…DIIFVEWAKS (78 aa).

This sequence belongs to the splicing factor SR family.

It localises to the nucleus. Its function is as follows. Has a role in pre-mRNA splicing where it is involved in spliceosome assembly. This Schizosaccharomyces pombe (strain 972 / ATCC 24843) (Fission yeast) protein is Putative splicing factor C222.18.